We begin with the raw amino-acid sequence, 231 residues long: Large ribosomal subunit protein uL1 (231 aa).

It belongs to the universal ribosomal protein uL1 family. As to quaternary structure, part of the 50S ribosomal subunit.

Its function is as follows. Binds directly to 23S rRNA. The L1 stalk is quite mobile in the ribosome, and is involved in E site tRNA release. In terms of biological role, protein L1 is also a translational repressor protein, it controls the translation of the L11 operon by binding to its mRNA. The sequence is that of Large ribosomal subunit protein uL1 from Neisseria meningitidis serogroup A / serotype 4A (strain DSM 15465 / Z2491).